A 233-amino-acid polypeptide reads, in one-letter code: MTEYHVRIRELPPTDKPRERLRSSGAAALADAELLAILLRVGIEGMNAIQLAQQLLVEFGGWNGLQRAGFEELAQRRGMGEAKTAQLKAALEIGRRLLLAGGDERFLIRSPTDAAQLMQIEMSHLDQEQLRAICLDTKNRVQKIQTVYIGSLHTSMVRIGEIFKEPIRLNSASIIVVHNHPSGDPTPSPEDVVVTRQIIEAGRLLDIDVLDHLVIGAGRFVSMRERGLGFGKP.

One can recognise an MPN domain in the interval 107–229 (LIRSPTDAAQ…FVSMRERGLG (123 aa)). Residues histidine 178, histidine 180, and aspartate 191 each coordinate Zn(2+). The JAMM motif motif lies at 178 to 191 (HNHPSGDPTPSPED).

Belongs to the UPF0758 family.

In Roseiflexus sp. (strain RS-1), this protein is UPF0758 protein RoseRS_0767.